The sequence spans 315 residues: MSSRTNISCLQEAKRVAIFGGTHGNEMSGIVLANMWIQNATEIERKGLVCKPFITNPRAVEKCTRYIDTDLNRAFTPENLSASELEALPYEVQRAKEINQMFGPKGGSDAYDVIFDLHNTTSNMGSTLILESSTDLFNLQMVHYIKKAMAPHTCSVLLNEHPQLKYSTTRSVAKHPVGLEVGPQPQGVLRSNVFESMRTILKHALDFIELFNNGVEFPPCTVNVFRVQERMDYPRDTNGNITAMVHPHLQDCDWEPLNRGDPMFLTFDGRTILYEGANTVYPTFINEAAYYEKQQAFVTTCREILAANAIRKAFK.

H23 and E26 together coordinate Zn(2+). Substrate-binding positions include R65 and 72 to 73; that span reads NR. H118 is a binding site for Zn(2+). Residues 166–170, E180, and Y290 contribute to the substrate site; that span reads YSTTR. E180 is an active-site residue.

This sequence belongs to the AspA/AstE family. Aspartoacylase subfamily. It depends on Zn(2+) as a cofactor.

It localises to the cytoplasm. The protein resides in the nucleus. The catalysed reaction is an N-acyl-L-aspartate + H2O = a carboxylate + L-aspartate. Its function is as follows. Catalyzes the deacetylation of N-acetylaspartic acid (NAA) to produce acetate and L-aspartate. This is Aspartoacylase (aspa) from Danio rerio (Zebrafish).